The following is a 165-amino-acid chain: Cyanate hydratase (165 aa).

Catalysis depends on residues arginine 106, glutamate 109, and serine 132.

The protein belongs to the cyanase family.

It carries out the reaction cyanate + hydrogencarbonate + 3 H(+) = NH4(+) + 2 CO2. Catalyzes the reaction of cyanate with bicarbonate to produce ammonia and carbon dioxide. The chain is Cyanate hydratase from Laccaria bicolor (strain S238N-H82 / ATCC MYA-4686) (Bicoloured deceiver).